A 279-amino-acid polypeptide reads, in one-letter code: MTPAQSQARAQLSDGRYVYCVVDTTSVPSASVGETTGIDDETVRVVSVDGVGAVVHDCTSVYDADDIDQVKRWLVTHQQVVDDVSDVFGTPLPMRFDTVFAGGDSALTDWLADTHPRLRTELDGFAGCWEYRVTLLWDPQPFEAHVTATDDTLQALEARQAEADAGTTFLLEKQYDARLAERRRARRSALASDLSAAVEPVATQVASQDTTTSLRDESVSERHTPIARLAVLAPETDESALGSQLDDIAARDGVTIRFTGPWPPYTFAPDICTDEPNQA.

It belongs to the gas vesicle GvpF/GvpL family. In terms of assembly, gvpF to GvpM interact with each other in vitro, and may form multi-subunit complex(es). Interacts with GvpC, GvpN and GvpO.

It is found in the gas vesicle. Proteins GvpF to GvpM might be involved in nucleating gas vesicle formation. A minor component of the gas vesicle. Gas vesicles are hollow, gas filled proteinaceous nanostructures found in several microbial planktonic microorganisms. They allow positioning of halobacteria at the optimal depth for growth in the poorly aerated, shallow brine pools of their habitat. Its function is as follows. Expression of 2 c-vac DNA fragments containing 2 divergently transcribed regions (gvpE-gvpF-gvpG-gvpH-gvpI-gvpJ-gvpK-gvpL-gvpM and gvpA-gvpC-gvpN-gvpO) allows H.volcanii to produce gas vesicles. This is Gas vesicle protein L2 from Halobacterium salinarum (strain ATCC 700922 / JCM 11081 / NRC-1) (Halobacterium halobium).